A 183-amino-acid polypeptide reads, in one-letter code: Large ribosomal subunit protein uL5 (183 aa).

It belongs to the universal ribosomal protein uL5 family. Part of the 50S ribosomal subunit; part of the 5S rRNA/L5/L18/L25 subcomplex. Contacts the 5S rRNA and the P site tRNA. Forms a bridge to the 30S subunit in the 70S ribosome.

Its function is as follows. This is one of the proteins that bind and probably mediate the attachment of the 5S RNA into the large ribosomal subunit, where it forms part of the central protuberance. In the 70S ribosome it contacts protein S13 of the 30S subunit (bridge B1b), connecting the 2 subunits; this bridge is implicated in subunit movement. Contacts the P site tRNA; the 5S rRNA and some of its associated proteins might help stabilize positioning of ribosome-bound tRNAs. This Corynebacterium aurimucosum (strain ATCC 700975 / DSM 44827 / CIP 107346 / CN-1) (Corynebacterium nigricans) protein is Large ribosomal subunit protein uL5.